Here is a 454-residue protein sequence, read N- to C-terminus: L-cysteine desulfhydrase (454 aa).

The segment at M1–A25 is disordered. The span at H14–R23 shows a compositional bias: basic residues. K257 carries the N6-(pyridoxal phosphate)lysine modification.

It belongs to the class-V pyridoxal-phosphate-dependent aminotransferase family. Pyridoxal 5'-phosphate is required as a cofactor. In terms of tissue distribution, highly expressed in stems and cauline leaves, and at lower levels in roots, rosette leaves and flowers.

The catalysed reaction is L-cysteine + H2O = hydrogen sulfide + pyruvate + NH4(+) + H(+). Catalyzes the production of hydrogen sulfide (H2S) from cysteine. Is mainly responsible for the degradation of cysteine to generate H2S, a regulator of stomatal movement and closure. This chain is L-cysteine desulfhydrase (LCD), found in Arabidopsis thaliana (Mouse-ear cress).